The following is a 555-amino-acid chain: La-related protein 7 (555 aa).

An HTH La-type RNA-binding domain is found at 36-127; the sequence is RSRVKQLLSD…RRKEPLGETP (92 aa). In terms of domain architecture, RRM spans 133-211; the sequence is RTVYVELLPK…PRKPGIFPKT (79 aa). Residues 218 to 327 are disordered; it reads PFDAVTQDND…ENKDEELNSL (110 aa). Polar residues-rich tracts occupy residues 238–251, 258–274, and 284–293; these read KNST…NNMD, STVT…STVS, and SQSFEASSGE. Residues 295 to 356 adopt a coiled-coil conformation; the sequence is QFEMSSKMRK…ERLKVGEEVI (62 aa). Positions 303 to 327 are enriched in basic and acidic residues; it reads RKVEEEKSELKDLSSENKDEELNSL. A xRRM domain is found at 425–538; that stretch reads EFLSGVIVKI…TEKLISKAEK (114 aa).

It belongs to the LARP7 family. In terms of assembly, core component of the 7SK RNP complex. Associates with box C/D small nucleolar ribonucleoprotein (snoRNP) complexes.

It localises to the nucleus. The protein localises to the nucleoplasm. Functionally, RNA-binding protein that specifically binds distinct small nuclear RNA (snRNAs) and regulates their processing and function. Specifically binds the 7SK snRNA (7SK RNA) and acts as a core component of the 7SK ribonucleoprotein (RNP) complex, thereby acting as a negative regulator of transcription elongation by RNA polymerase II. The 7SK RNP complex sequesters the positive transcription elongation factor b (P-TEFb) in a large inactive 7SK RNP complex preventing RNA polymerase II phosphorylation and subsequent transcriptional elongation. The 7SK RNP complex also promotes snRNA gene transcription by RNA polymerase II via interaction with the little elongation complex (LEC). LARP7 specifically binds to the highly conserved 3'-terminal U-rich stretch of 7SK RNA; on stimulation, remains associated with 7SK RNA, whereas P-TEFb is released from the complex. LARP7 also acts as a regulator of mRNA splicing fidelity by promoting U6 snRNA processing. Specifically binds U6 snRNAs and associates with a subset of box C/D RNP complexes: promotes U6 snRNA 2'-O-methylation by facilitating U6 snRNA loading into box C/D RNP complexes. U6 snRNA 2'-O-methylation is required for mRNA splicing fidelity. The chain is La-related protein 7 from Danio rerio (Zebrafish).